The chain runs to 227 residues: Probable cell wall protein PGA42 (227 aa).

The signal sequence occupies residues methionine 1–alanine 16. Asparagine 192 carries N-linked (GlcNAc...) asparagine glycosylation. Serine 200 carries GPI-anchor amidated serine lipidation. A propeptide spans glycine 201–valine 227 (removed in mature form).

This sequence belongs to the IHD1 family. Post-translationally, the GPI-anchor is attached to the protein in the endoplasmic reticulum and serves to target the protein to the cell surface. There, the glucosamine-inositol phospholipid moiety is cleaved off and the GPI-modified mannoprotein is covalently attached via its lipidless GPI glycan remnant to the 1,6-beta-glucan of the outer cell wall layer.

It is found in the secreted. Its subcellular location is the cell wall. The protein resides in the membrane. Functionally, probable GPI-anchored cell wall protein that may be involved in cell wall organization, hyphal growth, as well as in virulence. The polypeptide is Probable cell wall protein PGA42 (PGA42) (Candida albicans (strain SC5314 / ATCC MYA-2876) (Yeast)).